Consider the following 943-residue polypeptide: Isoleucine--tRNA ligase (943 aa).

A 'HIGH' region motif is present at residues 59–69; the sequence is PYANGQIHLGH. Glutamate 577 is a binding site for L-isoleucyl-5'-AMP. A 'KMSKS' region motif is present at residues 618 to 622; it reads KMSKS. Residue lysine 621 coordinates ATP. Zn(2+) is bound by residues cysteine 906, cysteine 909, cysteine 926, and cysteine 929.

The protein belongs to the class-I aminoacyl-tRNA synthetase family. IleS type 1 subfamily. In terms of assembly, monomer. The cofactor is Zn(2+).

It is found in the cytoplasm. It carries out the reaction tRNA(Ile) + L-isoleucine + ATP = L-isoleucyl-tRNA(Ile) + AMP + diphosphate. Functionally, catalyzes the attachment of isoleucine to tRNA(Ile). As IleRS can inadvertently accommodate and process structurally similar amino acids such as valine, to avoid such errors it has two additional distinct tRNA(Ile)-dependent editing activities. One activity is designated as 'pretransfer' editing and involves the hydrolysis of activated Val-AMP. The other activity is designated 'posttransfer' editing and involves deacylation of mischarged Val-tRNA(Ile). The polypeptide is Isoleucine--tRNA ligase (Xylella fastidiosa (strain 9a5c)).